A 159-amino-acid polypeptide reads, in one-letter code: Ribosomal RNA large subunit methyltransferase H (159 aa).

Gly108 provides a ligand contact to S-adenosyl-L-methionine.

It belongs to the RNA methyltransferase RlmH family. Homodimer.

The protein resides in the cytoplasm. It catalyses the reaction pseudouridine(1915) in 23S rRNA + S-adenosyl-L-methionine = N(3)-methylpseudouridine(1915) in 23S rRNA + S-adenosyl-L-homocysteine + H(+). Specifically methylates the pseudouridine at position 1915 (m3Psi1915) in 23S rRNA. The protein is Ribosomal RNA large subunit methyltransferase H of Lactobacillus johnsonii (strain CNCM I-12250 / La1 / NCC 533).